Consider the following 1053-residue polypeptide: Protein CLEC16A (1053 aa).

Residues 51–198 form the FPL domain; it reads IRSITEILIW…AVRTITLNVY (148 aa). 3 disordered regions span residues 375 to 434, 452 to 471, and 892 to 983; these read SLEM…GESE, STSVQEQNTTDEEKSAAATC, and SSPS…SPSL. Basic residues predominate over residues 381 to 392; sequence HKGKRRVQKRPN. Residues 892–938 show a composition bias toward low complexity; sequence SSPSLSSQSPPSASGSPSGSGSTSHCDSGGTSSSSTPSTAQSPADAP.

The protein belongs to the CLEC16A/gop-1 family. As to quaternary structure, interacts with RNF41/NRDP1. In terms of tissue distribution, almost exclusively expressed in immune cells, including dendritic cells, B-lymphocytes and natural killer cells.

It localises to the endosome membrane. It is found in the lysosome membrane. Regulator of mitophagy through the upstream regulation of the RNF41/NRDP1-PRKN pathway. Mitophagy is a selective form of autophagy necessary for mitochondrial quality control. The RNF41/NRDP1-PRKN pathway regulates autophagosome-lysosome fusion during late mitophagy. May protect RNF41/NRDP1 from proteasomal degradation, RNF41/NRDP1 which regulates proteasomal degradation of PRKN. Plays a key role in beta cells functions by regulating mitophagy/autophagy and mitochondrial health. This chain is Protein CLEC16A, found in Homo sapiens (Human).